The primary structure comprises 136 residues: Serine--glyoxylate aminotransferase (136 aa).

This sequence belongs to the class-V pyridoxal-phosphate-dependent aminotransferase family. In terms of assembly, homodimer. The cofactor is pyridoxal 5'-phosphate. As to expression, expressed in leaves but not in root tissue or seedlings.

The protein localises to the peroxisome. The catalysed reaction is glyoxylate + L-serine = 3-hydroxypyruvate + glycine. It catalyses the reaction glyoxylate + L-alanine = glycine + pyruvate. Inhibited by aminooxyacetate. This Zea mays (Maize) protein is Serine--glyoxylate aminotransferase.